Consider the following 913-residue polypeptide: MFPEDEYQLEFFRTEGFVRKVCESCGGSFWTRDASRRTCGDPPCDPYSFIGSPVFREMELDSMREHYLSFFEAHGHTRVQRYPVVARWRDDIYLTIASIADFQPFVTSGQVPPPANPLTISQPCIRLDDLDSVGRSGRHLTTFEMMAHHVFNTKEHEIYWKDRTVELCDELLLGLGVDPESITYKESPWAGGGNAGPSLEVLVGGLELATLVFMNLRLDSSGEYVIKGERYSRMDNYIVDTGYGLERFVWASKGSPTIYDAVFPDIVRELSDLAGVEHDLHDPEYAEIFARNARLAGMIDLGEASLRDLRKRIAESINTTPERLERIMAPMERIYAIADHTRCLAYMLGDGIIPSNVKAGYLARLVIRRTLRMMKDLKLEIPLSEIVEMQISKLDYDDWRERMETISEILSLEEERYAETLEKGSRMVSKIASHYSKKGGRIPLTELVSLYDTHGIPPEIARETAGALGVDVELPDNFYSIVASTHSRAEQREVETRSPPFEKTERLFYYRPFDQEFDATVLGIFEGSVVLDRTLFYPEGGGQPADRGVLVRDGQVFNVNDVQMIDGVVLHRVEQEGLSPGDRVTGRIDMRRRMAHARHHTATHIVNDSAKRVLGRHVWQAGAQKSEDRARLDISHYRRISDEELKAIELEANRRVMEMIPVITEFMPREEAERLFGFQLYQGGVPPGREIRVVRVGSDIEACAGTHVTNTGMIGPIKILRTERVQDGVERIEFAAGEAAVQRIQERDDILAEAASILRVPIEQLPRTVFRFFEEWKDQQKVIEHLKEEIAGIRILTLSSEAVDVNGVSIVARDMGESDGETLLKAATMLSERDITAILGGASGGAAKIVVSVGRSGLERGLNAADIVRAAAKYIGGGGGGKPDLAQGGGPNVGGLRAAIDAGMSAARKALQV.

Zn(2+) is bound by residues H600, H604, C703, and H707.

This sequence belongs to the class-II aminoacyl-tRNA synthetase family. Zn(2+) is required as a cofactor.

It is found in the cytoplasm. The catalysed reaction is tRNA(Ala) + L-alanine + ATP = L-alanyl-tRNA(Ala) + AMP + diphosphate. Functionally, catalyzes the attachment of alanine to tRNA(Ala) in a two-step reaction: alanine is first activated by ATP to form Ala-AMP and then transferred to the acceptor end of tRNA(Ala). Also edits incorrectly charged Ser-tRNA(Ala) and Gly-tRNA(Ala) via its editing domain. This Methanothrix thermoacetophila (strain DSM 6194 / JCM 14653 / NBRC 101360 / PT) (Methanosaeta thermophila) protein is Alanine--tRNA ligase.